A 156-amino-acid polypeptide reads, in one-letter code: Ribosomal RNA large subunit methyltransferase H (156 aa).

Residues Leu-73, Gly-104, and 123 to 128 contribute to the S-adenosyl-L-methionine site; that span reads IGPLTL.

It belongs to the RNA methyltransferase RlmH family. Homodimer.

The protein resides in the cytoplasm. The enzyme catalyses pseudouridine(1915) in 23S rRNA + S-adenosyl-L-methionine = N(3)-methylpseudouridine(1915) in 23S rRNA + S-adenosyl-L-homocysteine + H(+). Specifically methylates the pseudouridine at position 1915 (m3Psi1915) in 23S rRNA. The polypeptide is Ribosomal RNA large subunit methyltransferase H (Stenotrophomonas maltophilia (strain K279a)).